A 241-amino-acid chain; its full sequence is Proteasome subunit alpha type-5 (241 aa).

Met-1 carries the N-acetylmethionine modification. Ser-16 is modified (phosphoserine). Thr-55 bears the Phosphothreonine mark. Phosphoserine is present on residues Ser-56 and Ser-63. The O-linked (GlcNAc) serine glycan is linked to Ser-198.

This sequence belongs to the peptidase T1A family. As to quaternary structure, the 26S proteasome consists of a 20S proteasome core and two 19S regulatory subunits. The 20S proteasome core is a barrel-shaped complex made of 28 subunits that are arranged in four stacked rings. The two outer rings are each formed by seven alpha subunits, and the two inner rings are formed by seven beta subunits. The proteolytic activity is exerted by three beta-subunits PSMB5, PSMB6 and PSMB7. PSMA5 interacts directly with the PSMG1-PSMG2 heterodimer which promotes 20S proteasome assembly.

It is found in the cytoplasm. The protein localises to the nucleus. Its function is as follows. Component of the 20S core proteasome complex involved in the proteolytic degradation of most intracellular proteins. This complex plays numerous essential roles within the cell by associating with different regulatory particles. Associated with two 19S regulatory particles, forms the 26S proteasome and thus participates in the ATP-dependent degradation of ubiquitinated proteins. The 26S proteasome plays a key role in the maintenance of protein homeostasis by removing misfolded or damaged proteins that could impair cellular functions, and by removing proteins whose functions are no longer required. Associated with the PA200 or PA28, the 20S proteasome mediates ubiquitin-independent protein degradation. This type of proteolysis is required in several pathways including spermatogenesis (20S-PA200 complex) or generation of a subset of MHC class I-presented antigenic peptides (20S-PA28 complex). The protein is Proteasome subunit alpha type-5 (PSMA5) of Bos taurus (Bovine).